The chain runs to 195 residues: Xanthine phosphoribosyltransferase (195 aa).

The xanthine site is built by L20 and N27. 128-132 (ANGQA) contacts 5-phospho-alpha-D-ribose 1-diphosphate. K156 provides a ligand contact to xanthine.

It belongs to the purine/pyrimidine phosphoribosyltransferase family. Xpt subfamily. Homodimer.

It localises to the cytoplasm. The catalysed reaction is XMP + diphosphate = xanthine + 5-phospho-alpha-D-ribose 1-diphosphate. It participates in purine metabolism; XMP biosynthesis via salvage pathway; XMP from xanthine: step 1/1. Converts the preformed base xanthine, a product of nucleic acid breakdown, to xanthosine 5'-monophosphate (XMP), so it can be reused for RNA or DNA synthesis. The chain is Xanthine phosphoribosyltransferase from Lactiplantibacillus plantarum (strain ATCC BAA-793 / NCIMB 8826 / WCFS1) (Lactobacillus plantarum).